The primary structure comprises 499 residues: Fumarate hydratase 2 (499 aa).

The interval Ala-19 to Val-51 is disordered. Residues Leu-23–Thr-45 show a composition bias toward basic and acidic residues. Substrate contacts are provided by residues Ser-134–Thr-136, His-164–Asp-167, Ser-174–Asn-176, and Thr-222. The Proton donor/acceptor role is filled by His-223. Ser-353 is a catalytic residue. Substrate contacts are provided by residues Ser-354 and Lys-359–Asn-361.

It belongs to the class-II fumarase/aspartase family. Fumarase subfamily. In terms of assembly, homotetramer.

It localises to the cytoplasm. Its subcellular location is the cytosol. It carries out the reaction (S)-malate = fumarate + H2O. Its activity is regulated as follows. Fumarate hydratase activity (fumarate to L-malate) is strongly inhibited by phosphoenolpyruvate, citrate, oxaloacetate, ATP and ADP. Malate dehydratase activity (malate to fumarate) is activated by oxaloacetate, Asn and Gln. Malate dehydratase activity (malate to fumarate) is inhibited by citrate, succinate, ADP and ATP. Functionally, cytosolic fumarate hydratase that catalyzes the reversible stereospecific interconversion of fumarate to L-malate. Catalyzes the dehydration of L-malate to fumarate in the cytosol: required for the massive fumarate accumulation during the day in plants grown under high nitrogen. Also required for acclimation of photosynthesis to cold: acts by mediating accumulation of fumarate at low temperature, leading to reduce accumulation of phosphorylated sugars. The protein is Fumarate hydratase 2 of Arabidopsis thaliana (Mouse-ear cress).